A 316-amino-acid polypeptide reads, in one-letter code: Pantothenate kinase (316 aa).

95 to 102 (GSVAVGKS) serves as a coordination point for ATP.

This sequence belongs to the prokaryotic pantothenate kinase family.

Its subcellular location is the cytoplasm. It catalyses the reaction (R)-pantothenate + ATP = (R)-4'-phosphopantothenate + ADP + H(+). It functions in the pathway cofactor biosynthesis; coenzyme A biosynthesis; CoA from (R)-pantothenate: step 1/5. This Klebsiella pneumoniae (strain 342) protein is Pantothenate kinase.